The chain runs to 626 residues: L-amino-acid oxidase 4 (626 aa).

The first 18 residues, 1-18 (KSFFRSLVAASLVIVSYS), serve as a signal peptide directing secretion. Asn54 carries an N-linked (GlcNAc...) asparagine glycan. FAD is bound by residues Gly75, Glu94, Ala95, Arg102, Met122, and Arg123. Arg123 lines the L-glutamate pocket. Position 123 (Arg123) interacts with L-glutamine. Residue Arg123 coordinates L-lysine. An L-phenylalanine-binding site is contributed by Arg123. Asn164, Asn193, and Asn331 each carry an N-linked (GlcNAc...) asparagine glycan. Residue Val334 participates in FAD binding. Tyr457 is a binding site for L-glutamate. Residue Tyr457 participates in L-glutamine binding. Tyr457 contributes to the L-lysine binding site. Tyr457 serves as a coordination point for L-phenylalanine. Glu551 serves as a coordination point for FAD. Ala558 provides a ligand contact to L-phenylalanine. Trp559 and Val560 together coordinate FAD.

This sequence belongs to the flavin monoamine oxidase family. FIG1 subfamily. As to quaternary structure, homodimer. FAD is required as a cofactor. Out of the 4 glycosylated residues, Asn-54 is hypermannosylated. The presence of a hypermannosylated N-glycan on Asn-54 leads to adoption of a more active conformation in the absence of acid activation.

The protein localises to the secreted. It carries out the reaction an L-alpha-amino acid + O2 + H2O = a 2-oxocarboxylate + H2O2 + NH4(+). It catalyses the reaction L-lysine + O2 + H2O = 6-amino-2-oxohexanoate + H2O2 + NH4(+). The catalysed reaction is L-glutamate + O2 + H2O = H2O2 + 2-oxoglutarate + NH4(+). The enzyme catalyses L-arginine + O2 + H2O = 5-guanidino-2-oxopentanoate + H2O2 + NH4(+). It carries out the reaction L-leucine + O2 + H2O = 4-methyl-2-oxopentanoate + H2O2 + NH4(+). It catalyses the reaction L-asparagine + O2 + H2O = 2-oxosuccinamate + H2O2 + NH4(+). The catalysed reaction is L-histidine + O2 + H2O = 3-(imidazol-5-yl)pyruvate + H2O2 + NH4(+). The enzyme catalyses L-isoleucine + O2 + H2O = (S)-3-methyl-2-oxopentanoate + H2O2 + NH4(+). It carries out the reaction L-methionine + O2 + H2O = 4-methylsulfanyl-2-oxobutanoate + H2O2 + NH4(+). It catalyses the reaction L-phenylalanine + O2 + H2O = 3-phenylpyruvate + H2O2 + NH4(+). The catalysed reaction is L-tyrosine + O2 + H2O = 3-(4-hydroxyphenyl)pyruvate + H2O2 + NH4(+). The enzyme catalyses L-glutamine + O2 + H2O = 2-oxoglutaramate + H2O2 + NH4(+). It carries out the reaction L-alanine + O2 + H2O = pyruvate + H2O2 + NH4(+). With respect to regulation, LAAO4 is activated by exposure to acidic pH, the detergent sodium dodecyl sulfate, or freezing. In terms of biological role, catalyzes the oxidative deamination of L-amino acids with molecular oxygen to the corresponding alpha-keto acids and ammonia. L-glutamine shows the highest relative activity but LAAO4 has a broad substrate specificity, including L-amino acids with big aromatic, acidic and basic side chains. Methyl esters of these L-amino acids are also accepted, ethyl esters are converted but with lower activity, whereas D-Amino acids are not converted. No reaction is detected for small polar amino acids such as L-cysteine or L-aspartate, and very little for small, branched hydrophobic amino acids like L-valine. This chain is L-amino-acid oxidase 4, found in Hebeloma cylindrosporum.